The primary structure comprises 408 residues: MEMEAKRSRLLTTARPYLQVLSLFGLTPPAEFFTRTLRKRRRFCWMAGYSLYLIAILLMVFYEFHANIVSLHLEIYKFHVEDFSKVMGRTQKFLIVAIATCNQLNILLNYGRLGLIYDEIANLDLGIDKSSKNFCGKSHWWSFRLRLTLSIGLWMVIIIGVIPRLTLGRAGPFFHWVNQVLTQIILIMLQLKGPEYCLFVLLVYELILRTRHVLEQLKDDLEDFDCGARIQELCVTLKQNQLLIGRIWRLVDEIGAYFRWSMTLLFLYNGLTILHVVNWAIIRSIDPNDCCQLNRLGSITFLSFNLLLTCFFSECCVKTYNSISYILHQIGCLPTAEEFQMLKMGLKEYILQMQHLKLLFTCGGLFDINIKLFGGMLVTLCGYVIIIVQFKIQDFALIGYRQNTSDTS.

Residues 1 to 42 (MEMEAKRSRLLTTARPYLQVLSLFGLTPPAEFFTRTLRKRRR) lie on the Cytoplasmic side of the membrane. The chain crosses the membrane as a helical span at residues 43-63 (FCWMAGYSLYLIAILLMVFYE). At 64–92 (FHANIVSLHLEIYKFHVEDFSKVMGRTQK) the chain is on the extracellular side. The chain crosses the membrane as a helical span at residues 93 to 113 (FLIVAIATCNQLNILLNYGRL). Topologically, residues 114–146 (GLIYDEIANLDLGIDKSSKNFCGKSHWWSFRLR) are cytoplasmic. A helical transmembrane segment spans residues 147–167 (LTLSIGLWMVIIIGVIPRLTL). At 168–183 (GRAGPFFHWVNQVLTQ) the chain is on the extracellular side. A helical membrane pass occupies residues 184–204 (IILIMLQLKGPEYCLFVLLVY). Topologically, residues 205 to 261 (ELILRTRHVLEQLKDDLEDFDCGARIQELCVTLKQNQLLIGRIWRLVDEIGAYFRWS) are cytoplasmic. The helical transmembrane segment at 262-282 (MTLLFLYNGLTILHVVNWAII) threads the bilayer. Residues 283–296 (RSIDPNDCCQLNRL) are Extracellular-facing. Residues 297 to 317 (GSITFLSFNLLLTCFFSECCV) form a helical membrane-spanning segment. Over 318–367 (KTYNSISYILHQIGCLPTAEEFQMLKMGLKEYILQMQHLKLLFTCGGLFD) the chain is Cytoplasmic. A helical membrane pass occupies residues 368 to 388 (INIKLFGGMLVTLCGYVIIIV). Over 389 to 408 (QFKIQDFALIGYRQNTSDTS) the chain is Extracellular. A glycan (N-linked (GlcNAc...) asparagine) is linked at Asn403.

This sequence belongs to the insect chemoreceptor superfamily. Gustatory receptor (GR) family. Gr2a subfamily.

The protein resides in the cell membrane. Its function is as follows. Probable gustatory receptor which mediates acceptance or avoidance behavior, depending on its substrates. This Drosophila melanogaster (Fruit fly) protein is Putative gustatory receptor 98c (Gr98c).